The following is a 465-amino-acid chain: Clusterin-like protein 1 (465 aa).

A signal peptide spans 1–20 (MKPSLLVFTVYLLWLKDCHC). Positions 62–106 (MMERREEEHTNLMKTLKKCKEEKQEALKLMNEVQEHLEEEESLCQ) form a coiled coil. Cystine bridges form between cysteine 105–cysteine 333, cysteine 116–cysteine 325, cysteine 119–cysteine 322, and cysteine 124–cysteine 315. 7 N-linked (GlcNAc...) asparagine glycosylation sites follow: asparagine 196, asparagine 257, asparagine 285, asparagine 311, asparagine 351, asparagine 412, and asparagine 430.

Belongs to the clusterin family. As to expression, retina-specific (at protein level). In the light-adapted retina, expressed in the outer segment of cone photoreceptors. In the dark-adapted retina, strongly expressed in the outer plexiform layer in the region of contact between the cone pedicles and second order neurons with little or no expression in the cone photoreceptor outer segments.

It localises to the secreted. In Canis lupus familiaris (Dog), this protein is Clusterin-like protein 1 (CLUL1).